The following is a 454-amino-acid chain: tRNA-2-methylthio-N(6)-dimethylallyladenosine synthase (454 aa).

Positions 11 to 128 constitute an MTTase N-terminal domain; that stretch reads KKLYIQTHGC…LPEMIETPRE (118 aa). 6 residues coordinate [4Fe-4S] cluster: cysteine 20, cysteine 57, cysteine 91, cysteine 165, cysteine 169, and cysteine 172. A Radical SAM core domain is found at 151 to 382; that stretch reads EADGATAFVS…QTRIIQQAQE (232 aa). The TRAM domain maps to 385–449; the sequence is RRMVGNTERV…PNSLRGVLLG (65 aa).

The protein belongs to the methylthiotransferase family. MiaB subfamily. Monomer. Requires [4Fe-4S] cluster as cofactor.

It is found in the cytoplasm. The enzyme catalyses N(6)-dimethylallyladenosine(37) in tRNA + (sulfur carrier)-SH + AH2 + 2 S-adenosyl-L-methionine = 2-methylsulfanyl-N(6)-dimethylallyladenosine(37) in tRNA + (sulfur carrier)-H + 5'-deoxyadenosine + L-methionine + A + S-adenosyl-L-homocysteine + 2 H(+). Catalyzes the methylthiolation of N6-(dimethylallyl)adenosine (i(6)A), leading to the formation of 2-methylthio-N6-(dimethylallyl)adenosine (ms(2)i(6)A) at position 37 in tRNAs that read codons beginning with uridine. The chain is tRNA-2-methylthio-N(6)-dimethylallyladenosine synthase from Saccharophagus degradans (strain 2-40 / ATCC 43961 / DSM 17024).